The chain runs to 448 residues: Glutamyl-tRNA reductase (448 aa).

Residues 49–52 (TCNR), serine 109, 114–116 (ETQ), and glutamine 120 contribute to the substrate site. Catalysis depends on cysteine 50, which acts as the Nucleophile. 189–194 (GAGEMG) lines the NADP(+) pocket.

It belongs to the glutamyl-tRNA reductase family. Homodimer.

It catalyses the reaction (S)-4-amino-5-oxopentanoate + tRNA(Glu) + NADP(+) = L-glutamyl-tRNA(Glu) + NADPH + H(+). It participates in porphyrin-containing compound metabolism; protoporphyrin-IX biosynthesis; 5-aminolevulinate from L-glutamyl-tRNA(Glu): step 1/2. Its function is as follows. Catalyzes the NADPH-dependent reduction of glutamyl-tRNA(Glu) to glutamate 1-semialdehyde (GSA). The protein is Glutamyl-tRNA reductase of Staphylococcus epidermidis (strain ATCC 12228 / FDA PCI 1200).